The primary structure comprises 99 residues: Photosystem II reaction center Psb28 protein (99 aa).

The protein belongs to the Psb28 family. Part of the photosystem II complex.

Its subcellular location is the cell inner membrane. The sequence is that of Photosystem II reaction center Psb28 protein from Gloeobacter violaceus (strain ATCC 29082 / PCC 7421).